Reading from the N-terminus, the 393-residue chain is NAD(P)H-quinone oxidoreductase subunit H, chloroplastic (393 aa).

It belongs to the complex I 49 kDa subunit family. As to quaternary structure, NDH is composed of at least 16 different subunits, 5 of which are encoded in the nucleus.

It localises to the plastid. The protein resides in the chloroplast thylakoid membrane. The catalysed reaction is a plastoquinone + NADH + (n+1) H(+)(in) = a plastoquinol + NAD(+) + n H(+)(out). It carries out the reaction a plastoquinone + NADPH + (n+1) H(+)(in) = a plastoquinol + NADP(+) + n H(+)(out). Functionally, NDH shuttles electrons from NAD(P)H:plastoquinone, via FMN and iron-sulfur (Fe-S) centers, to quinones in the photosynthetic chain and possibly in a chloroplast respiratory chain. The immediate electron acceptor for the enzyme in this species is believed to be plastoquinone. Couples the redox reaction to proton translocation, and thus conserves the redox energy in a proton gradient. The polypeptide is NAD(P)H-quinone oxidoreductase subunit H, chloroplastic (Gossypium hirsutum (Upland cotton)).